A 354-amino-acid chain; its full sequence is Kelch domain-containing protein 8B (354 aa).

Kelch repeat units follow at residues 1–31 (MAAG…HQDG), 32–79 (HLLV…VLGK), 81–127 (VLVV…ERDG), 128–175 (MVYA…LHGN), 176–222 (KIYV…MAEG), 224–281 (VFSL…SLGG), 282–329 (NIVA…QAGP), and 331–354 (LFVI…RDGV).

Its subcellular location is the cytoplasm. It is found in the midbody. In terms of biological role, involved in pinching off the separated nuclei at the cleavage furrow and in cytokinesis. Required for mitotic integrity and maintenance of chromosomal stability. Protects cells against mitotic errors, centrosomal amplification, micronucleus formation and aneuploidy. Plays a key role of midbody function involving abscission of the daughter cells during cytokinesis and appropriate chromosomal and nuclear segregation into the daughter cells. The polypeptide is Kelch domain-containing protein 8B (Klhdc8b) (Rattus norvegicus (Rat)).